Consider the following 381-residue polypeptide: Ceramide-binding protein svf-1 (381 aa).

Residues 1-18 (MFKWAQAALANVAGTKEP) are peripherally associates with membranes.

Belongs to the SVF1 family.

It localises to the golgi apparatus. The protein resides in the cis-Golgi network membrane. The protein localises to the endoplasmic reticulum membrane. It is found in the cytoplasm. Its subcellular location is the nucleus. Functionally, ceramide-binding protein that may transfer ceramides from the endoplasmic reticulum membrane to the cis-Golgi network membrane, and is thereby required for the biosynthesis of complex sphingolipids. The polypeptide is Ceramide-binding protein svf-1 (svf-1) (Neurospora crassa (strain ATCC 24698 / 74-OR23-1A / CBS 708.71 / DSM 1257 / FGSC 987)).